The chain runs to 310 residues: Phosphoribosylaminoimidazole-succinocarboxamide synthase (310 aa).

Belongs to the SAICAR synthetase family.

It catalyses the reaction 5-amino-1-(5-phospho-D-ribosyl)imidazole-4-carboxylate + L-aspartate + ATP = (2S)-2-[5-amino-1-(5-phospho-beta-D-ribosyl)imidazole-4-carboxamido]succinate + ADP + phosphate + 2 H(+). Its pathway is purine metabolism; IMP biosynthesis via de novo pathway; 5-amino-1-(5-phospho-D-ribosyl)imidazole-4-carboxamide from 5-amino-1-(5-phospho-D-ribosyl)imidazole-4-carboxylate: step 1/2. This Stenotrophomonas maltophilia (strain K279a) protein is Phosphoribosylaminoimidazole-succinocarboxamide synthase.